The following is a 194-amino-acid chain: Fatty acid metabolism regulator protein (194 aa).

Residues 5-65 form the HTH tetR-type domain; the sequence is RPKYMQIIDA…SLFKEKMGQF (61 aa). The segment at residues 28 to 47 is a DNA-binding region (H-T-H motif); the sequence is QVSKIAKQAGVADGTIYLYF.

As to quaternary structure, homodimer. Binds to DNA.

The protein resides in the cytoplasm. Transcriptional regulator in fatty acid degradation. Represses transcription of genes required for fatty acid transport and beta-oxidation, including acdA, fadA, fadB, fadE, fadF, fadG, fadH, fadM, fadN, lcfA and lcfB. Binding of FadR to DNA is specifically inhibited by long chain fatty acyl-CoA compounds of 14-20 carbon atoms in length. This is Fatty acid metabolism regulator protein (fadR) from Bacillus subtilis (strain 168).